The sequence spans 74 residues: MASSGAGVTAAGSANEAPEIPDNVGDWLRGVYRFATDRNDFRRNLILNLGLFAAGVWLARNLSDIDLMAPQPGV.

The segment covering 1-14 has biased composition (low complexity); the sequence is MASSGAGVTAAGSA. The tract at residues 1–24 is disordered; that stretch reads MASSGAGVTAAGSANEAPEIPDNV. Residue A2 is modified to N-acetylalanine.

It belongs to the Tom6 family. As to quaternary structure, forms part of the preprotein translocase complex of the outer mitochondrial membrane (TOM complex) which consists of at least 7 different proteins (TOMM5, TOMM6, TOMM7, TOMM20, TOMM22, TOMM40 and TOMM70).

It is found in the mitochondrion outer membrane. The sequence is that of Mitochondrial import receptor subunit TOM6 homolog (TOMM6) from Bos taurus (Bovine).